The following is a 337-amino-acid chain: G-protein coupled receptor 26 (337 aa).

Over 1–10 (MNSWDAGLAG) the chain is Extracellular. Residues 11 to 31 (LLVGTMGVSLLSNALVLLCLL) form a helical membrane-spanning segment. Residues 32-47 (HSADIRRQAPALFTLN) lie on the Cytoplasmic side of the membrane. Residues 48-68 (LTCGNLLCTVVNMPLTLAGVV) traverse the membrane as a helical segment. The Extracellular portion of the chain corresponds to 69 to 81 (AQRQPAGDRLCRL). C79 and C156 form a disulfide bridge. A helical transmembrane segment spans residues 82 to 102 (AAFLDTFLAANSMLSMAALSI). The Cytoplasmic portion of the chain corresponds to 103–123 (DRWVAVVFPLSYRAKMRLRDA). A helical membrane pass occupies residues 124 to 144 (ALMVAYTWLHALTFPAAALAL). Topologically, residues 145 to 168 (SWLGFHQLYASCTLCSRRPDERLR) are extracellular. The helical transmembrane segment at 169 to 189 (FAVFTGAFHALSFLLSFVVLC) threads the bilayer. Residues 190-245 (CTYLKVLKVARFHCKRIDVITMQTLVLLVDLHPSVRERCLEEQKRRRQRATKKIST) are Cytoplasmic-facing. A helical membrane pass occupies residues 246-266 (FIGTFLVCFAPYVITRLVELF). Topologically, residues 267 to 276 (STVPIGSHWG) are extracellular. A helical membrane pass occupies residues 277–297 (VLSKCLAYSKAASDPFVYSLL). The Cytoplasmic portion of the chain corresponds to 298–337 (RHQYRKSCKEILNRLLHRRSIHSSGLTGDSHSQNILPVSE).

Belongs to the G-protein coupled receptor 1 family. As to expression, highly expressed in the CNS, the highest expression is seen in the amygdala, hippocampus and thalamus. Weak expression is detected in testis. Down-regulated in glioblastoma.

It localises to the cell membrane. In terms of biological role, orphan receptor. Displays a significant level of constitutive activity. Its effect is mediated by G(s)-alpha protein that stimulate adenylate cyclase, resulting in an elevation of intracellular cAMP. This chain is G-protein coupled receptor 26 (GPR26), found in Homo sapiens (Human).